A 270-amino-acid chain; its full sequence is tRNA pseudouridine synthase A (270 aa).

D51 serves as the catalytic Nucleophile. Y109 contributes to the substrate binding site.

This sequence belongs to the tRNA pseudouridine synthase TruA family. As to quaternary structure, homodimer.

The enzyme catalyses uridine(38/39/40) in tRNA = pseudouridine(38/39/40) in tRNA. Its function is as follows. Formation of pseudouridine at positions 38, 39 and 40 in the anticodon stem and loop of transfer RNAs. The protein is tRNA pseudouridine synthase A of Burkholderia mallei (strain ATCC 23344).